The sequence spans 508 residues: MGLPWYRVHTVVLNDPGRLIAVHIMHTALVAGWAGSMALYELAVFDPSDPVLDPMWRQGMFVIPFMTRLGITDSWGGWSITGGTVTNPGIWSYEGVAGAHIVFSGLCFLAAIWHWVYWDLAIFVDDRTGKRSLDLPKIFGIHLFLSGVACFGFGTFHVTGLYGPGIWVSDPYGLTGKVQSVNPAWGVEGFDPFVPGGIASHHIAAGTLGILAGLFHLSVRPPQRLYKGLRMGNIETVLSSSIAAVFFAAFVVAGTMWYGSATTPIELFGPTRYQWDQGYFQQEIYRRVSAGLAENQSLSEAWSKIPEKLAFYDYIGNNPAKGGLFRAGSMDNGDGIAVGWLGHPIFRDKEGRELFVRRMPTFFETFPVVLVDGDGIVRADVPFRRAESKYSVEQVGVTVEFYGGELNGVSYSDPATVKKYARRAQLGEIFELDRATLKSDGVFRSSPRGWFTFGHASFALLFFFGHIWHGARTLFRDVFAGIDPDLDAQVEFGVFQKLGDPTTRRQVV.

The next 6 membrane-spanning stretches (helical) occupy residues 21 to 36 (AVHI…WAGS), 101 to 115 (IVFS…IWHW), 140 to 156 (GIHL…FGTF), 203 to 218 (IAAG…FHLS), 237 to 252 (VLSS…AFVV), and 457 to 472 (SFAL…HGAR).

The protein belongs to the PsbB/PsbC family. PsbB subfamily. As to quaternary structure, PSII is composed of 1 copy each of membrane proteins PsbA, PsbB, PsbC, PsbD, PsbE, PsbF, PsbH, PsbI, PsbJ, PsbK, PsbL, PsbM, PsbT, PsbX, PsbY, PsbZ, Psb30/Ycf12, at least 3 peripheral proteins of the oxygen-evolving complex and a large number of cofactors. It forms dimeric complexes. Binds multiple chlorophylls. PSII binds additional chlorophylls, carotenoids and specific lipids. serves as cofactor.

The protein localises to the plastid. It is found in the chloroplast thylakoid membrane. One of the components of the core complex of photosystem II (PSII). It binds chlorophyll and helps catalyze the primary light-induced photochemical processes of PSII. PSII is a light-driven water:plastoquinone oxidoreductase, using light energy to abstract electrons from H(2)O, generating O(2) and a proton gradient subsequently used for ATP formation. This chain is Photosystem II CP47 reaction center protein, found in Citrus sinensis (Sweet orange).